A 320-amino-acid polypeptide reads, in one-letter code: Large ribosomal subunit protein uL10y (320 aa).

The segment at 289 to 320 (AGGGAPAAAKVEEKEESDEEDYGGDFGLFDEE) is disordered. Over residues 302–320 (KEESDEEDYGGDFGLFDEE) the composition is skewed to acidic residues. A Phosphoserine modification is found at S305. Y310 is subject to Phosphotyrosine.

Belongs to the universal ribosomal protein uL10 family. In terms of assembly, P0 forms a pentameric complex by interaction with dimers of P1 and P2.

In terms of biological role, ribosomal protein P0 is the functional equivalent of E.coli protein L10. The chain is Large ribosomal subunit protein uL10y (RPP0B) from Arabidopsis thaliana (Mouse-ear cress).